A 773-amino-acid polypeptide reads, in one-letter code: Cytochrome c oxidase subunit 1+2 (773 aa).

The tract at residues 1 to 491 (MKLLEIYDKQ…LIASYGSLIT (491 aa)) is COX1. The chain crosses the membrane as a helical span at residues 41–61 (TMYITFSIFAGIIGTLLSLVI). E64 lines the Ca(2+) pocket. H85 serves as a coordination point for Fe(II)-heme a. 6 helical membrane-spanning segments follow: residues 87-111 (LIMIFFVVMYCSMPAMLGGFANWFL), 130-150 (LWLIVVSFGLLLTSSCVGIGA), 173-193 (VGILSLHIAGASSLVGAINFL), 211-231 (LFVWSVVITAVLLVLSLPVLA), 262-278 (LFHPEVYILILPGFGII), and 290-310 (IFGVKGMISAMSAIGFLGFLV). H264 provides a ligand contact to Cu cation. The segment at residues 264-268 (HPEVY) is a cross-link (1'-histidyl-3'-tyrosine (His-Tyr)). Y268 is a binding site for O2. The Cu cation site is built by H314 and H315. A run of 2 helical transmembrane segments spans residues 335-355 (IIAIPTGIKIFSWLATLWGGV) and 362-382 (MLFVIGFLVLFTIGGLTGVVL). Mg(2+) is bound by residues H392 and D393. 5 helical membrane passes run 396 to 416 (YVVAHFHYVLSMGAIFAIFAG), 444 to 464 (FWTMFIGVNVTFFPMHFLGLA), 483 to 503 (IASYGSLITAFGLLFFFVNIF), 555 to 575 (IFFYLIVVAVFIGWVMGRILW), and 604 to 624 (GTVIEIVWTLIPTVILYLIAI). Residue H400 participates in heme a3 binding. Residue H402 coordinates Fe(II)-heme a. Residues 492 to 773 (AFGLLFFFVN…VQEYLGRLYK (282 aa)) form a COX2 region. Residues H709, C744, C748, and H752 each contribute to the Cu cation site.

The protein in the N-terminal section; belongs to the heme-copper respiratory oxidase family. In the C-terminal section; belongs to the cytochrome c oxidase subunit 2 family. As to quaternary structure, component of the cytochrome c oxidase (complex IV, CIV), a multisubunit enzyme composed of a catalytic core of 3 subunits and several supernumerary subunits. The complex exists as a monomer or a dimer and forms supercomplexes (SCs) in the inner mitochondrial membrane with ubiquinol-cytochrome c oxidoreductase (cytochrome b-c1 complex, complex III, CIII). It depends on heme as a cofactor. Requires Cu cation as cofactor.

It localises to the mitochondrion inner membrane. It catalyses the reaction 4 Fe(II)-[cytochrome c] + O2 + 8 H(+)(in) = 4 Fe(III)-[cytochrome c] + 2 H2O + 4 H(+)(out). Its pathway is energy metabolism; oxidative phosphorylation. In terms of biological role, component of the cytochrome c oxidase, the last enzyme in the mitochondrial electron transport chain which drives oxidative phosphorylation. The respiratory chain contains 3 multisubunit complexes succinate dehydrogenase (complex II, CII), ubiquinol-cytochrome c oxidoreductase (cytochrome b-c1 complex, complex III, CIII) and cytochrome c oxidase (complex IV, CIV), that cooperate to transfer electrons derived from NADH and succinate to molecular oxygen, creating an electrochemical gradient over the inner membrane that drives transmembrane transport and the ATP synthase. Cytochrome c oxidase is the component of the respiratory chain that catalyzes the reduction of oxygen to water. Electrons originating from reduced cytochrome c in the intermembrane space (IMS) are transferred via the dinuclear copper A center (CU(A)) of subunit 2 and heme A of subunit 1 to the active site in subunit 1, a binuclear center (BNC) formed by heme A3 and copper B (CU(B)). The BNC reduces molecular oxygen to 2 water molecules using 4 electrons from cytochrome c in the IMS and 4 protons from the mitochondrial matrix. This is Cytochrome c oxidase subunit 1+2 (cox1/2) from Dictyostelium citrinum (Slime mold).